The sequence spans 892 residues: Phenylalanine--tRNA ligase beta subunit (892 aa).

A tRNA-binding domain is found at 39-150 (NPGVEGVVVG…PGLEPGMDVA (112 aa)). The region spanning 406–569 (AVPPVILLRT…RCEGYDAIPL (164 aa)) is the B5 domain. The insert stretch occupies residues 442–518 (VLTPADLAAD…ALLGGGESDG (77 aa)). Mg(2+) contacts are provided by D547, D553, E556, and E557. The FDX-ACB domain maps to 799–891 (PRFPAVTRDV…ALKALGAELR (93 aa)).

Belongs to the phenylalanyl-tRNA synthetase beta subunit family. Type 1 subfamily. Tetramer of two alpha and two beta subunits. Mg(2+) serves as cofactor.

Its subcellular location is the cytoplasm. The catalysed reaction is tRNA(Phe) + L-phenylalanine + ATP = L-phenylalanyl-tRNA(Phe) + AMP + diphosphate + H(+). The protein is Phenylalanine--tRNA ligase beta subunit of Symbiobacterium thermophilum (strain DSM 24528 / JCM 14929 / IAM 14863 / T).